A 188-amino-acid chain; its full sequence is GMP synthase [glutamine-hydrolyzing] subunit A (188 aa).

One can recognise a Glutamine amidotransferase type-1 domain in the interval 3-188 (KVLVVAFGGQ…FQNFVELCKR (186 aa)). Cys-79 (nucleophile) is an active-site residue. Active-site residues include His-166 and Glu-168.

Heterodimer composed of a glutamine amidotransferase subunit (A) and a GMP-binding subunit (B).

It catalyses the reaction XMP + L-glutamine + ATP + H2O = GMP + L-glutamate + AMP + diphosphate + 2 H(+). Its pathway is purine metabolism; GMP biosynthesis; GMP from XMP (L-Gln route): step 1/1. In terms of biological role, catalyzes the synthesis of GMP from XMP. This Ignicoccus hospitalis (strain KIN4/I / DSM 18386 / JCM 14125) protein is GMP synthase [glutamine-hydrolyzing] subunit A.